Consider the following 142-residue polypeptide: FAD synthase (142 aa).

Residues 9 to 10, 14 to 17, and aspartate 92 contribute to the ATP site; these read TF and HPGH.

It belongs to the archaeal FAD synthase family. Homodimer. A divalent metal cation serves as cofactor.

It catalyses the reaction FMN + ATP + H(+) = FAD + diphosphate. It participates in cofactor biosynthesis; FAD biosynthesis; FAD from FMN: step 1/1. In terms of biological role, catalyzes the transfer of the AMP portion of ATP to flavin mononucleotide (FMN) to produce flavin adenine dinucleotide (FAD) coenzyme. The chain is FAD synthase from Halalkalicoccus jeotgali (strain DSM 18796 / CECT 7217 / JCM 14584 / KCTC 4019 / B3).